Reading from the N-terminus, the 512-residue chain is Kynurenine 3-monooxygenase (512 aa).

It belongs to the aromatic-ring hydroxylase family. KMO subfamily. FAD serves as cofactor.

Its subcellular location is the mitochondrion outer membrane. The catalysed reaction is L-kynurenine + NADPH + O2 + H(+) = 3-hydroxy-L-kynurenine + NADP(+) + H2O. Its pathway is cofactor biosynthesis; NAD(+) biosynthesis; quinolinate from L-kynurenine: step 1/3. Catalyzes the hydroxylation of L-kynurenine (L-Kyn) to form 3-hydroxy-L-kynurenine (L-3OHKyn). Required for synthesis of quinolinic acid. This Neurospora crassa (strain ATCC 24698 / 74-OR23-1A / CBS 708.71 / DSM 1257 / FGSC 987) protein is Kynurenine 3-monooxygenase (nic-3).